The primary structure comprises 340 residues: Protein-arginine kinase (340 aa).

Residues 21–242 (VVLSSRIRLA…EQIIMQERVA (222 aa)) form the Phosphagen kinase C-terminal domain. ATP is bound by residues 24-28 (SSRIR), H79, R113, 164-168 (RASVM), and 195-200 (RGIYGE).

The protein belongs to the ATP:guanido phosphotransferase family.

The catalysed reaction is L-arginyl-[protein] + ATP = N(omega)-phospho-L-arginyl-[protein] + ADP + H(+). Functionally, catalyzes the specific phosphorylation of arginine residues in proteins. This chain is Protein-arginine kinase, found in Listeria innocua serovar 6a (strain ATCC BAA-680 / CLIP 11262).